The primary structure comprises 194 residues: Ribonuclease HII (194 aa).

Residues 3-193 (ILTAGVDEAG…VRNLLAQQAL (191 aa)) enclose the RNase H type-2 domain. A divalent metal cation contacts are provided by D9, E10, and D101.

It belongs to the RNase HII family. Requires Mn(2+) as cofactor. The cofactor is Mg(2+).

It localises to the cytoplasm. The catalysed reaction is Endonucleolytic cleavage to 5'-phosphomonoester.. Endonuclease that specifically degrades the RNA of RNA-DNA hybrids. The chain is Ribonuclease HII from Neisseria gonorrhoeae (strain ATCC 700825 / FA 1090).